Consider the following 241-residue polypeptide: NEP1-interacting protein 2 (241 aa).

The tract at residues 1–20 (MASSSSSSYRFQSGSYPLSS) is disordered. Topologically, residues 1–36 (MASSSSSSYRFQSGSYPLSSSPSLGNFVERIKDACH) are lumenal, thylakoid. The chain crosses the membrane as a helical span at residues 37–57 (FLVSAVLGTIISAILTFFFAL). The Stromal segment spans residues 58–76 (VGTLLGALTGALIGQETES). Residues 77-97 (GFIRGAAIGAISGAVFSIEVF) form a helical membrane-spanning segment. Residues 98–109 (ESSLDLWKSDES) lie on the Lumenal, thylakoid side of the membrane. A helical membrane pass occupies residues 110–130 (GFGCFLYLIDVIVSLLSGRLV). Residues 131–241 (RERIGPAMLS…GSCPMCRRDI (111 aa)) lie on the Stromal side of the membrane. Residues 196 to 238 (CSVCLQDFQLGETVRSLPHCHHMFHLPCIDNWLLRHGSCPMCR) form an RING-type; atypical zinc finger.

This sequence belongs to the RING-type zinc finger family. NIP subfamily. As to quaternary structure, interacts with RPOT2.

The protein resides in the plastid. Its subcellular location is the chloroplast thylakoid membrane. Functionally, intrinsic thylakoid membrane protein that fixes RPOT2 on the stromal side of the thylakoid membrane. This chain is NEP1-interacting protein 2 (NIP2), found in Arabidopsis thaliana (Mouse-ear cress).